The sequence spans 1342 residues: Cytokinesis protein sepH (1342 aa).

Positions 1-10 (MVSRSSEGAE) are enriched in low complexity. The interval 1–47 (MVSRSSEGAEGPPPSAPKPPNTPAKSRLSRLGSSPSKREDKSRDDRM) is disordered. The segment covering 11 to 22 (GPPPSAPKPPNT) has biased composition (pro residues). Over residues 36–47 (SKREDKSRDDRM) the composition is skewed to basic and acidic residues. Residues 61 to 308 (YQLGDCLGKG…ARKLLKHPWI (248 aa)) form the Protein kinase domain. ATP is bound by residues 67 to 75 (LGKGAFGSV) and Lys90. The active-site Proton acceptor is Asp180. 3 disordered regions span residues 336–396 (NEAL…EEDN), 441–486 (IKSD…QLQE), and 552–591 (ADENVDPFESSPSKEAIRNRASAEDVMGQQPQLRKQISVK). The segment covering 369 to 379 (KDTLPSPVSRN) has biased composition (polar residues). The stretch at 658–695 (FAQLEEGLDEMDLEANIARDKHARLRNQVEGLVSSLKT) forms a coiled coil. The disordered stretch occupies residues 1201–1342 (SEAYGMGKRK…QTQADADWTP (142 aa)). Over residues 1207–1217 (GKRKPMVRRRS) the composition is skewed to basic residues. Polar residues-rich tracts occupy residues 1218 to 1244 (TSATPPNLLANQSAPSTPQMNRTSQSK) and 1273 to 1290 (DGSTPSLTAGLNGSTGAS). Residues 1315–1324 (RPSSSLSRRQ) show a composition bias toward low complexity.

The protein belongs to the protein kinase superfamily. Ser/Thr protein kinase family. CDC7 subfamily. It depends on Mg(2+) as a cofactor.

The enzyme catalyses L-seryl-[protein] + ATP = O-phospho-L-seryl-[protein] + ADP + H(+). The catalysed reaction is L-threonyl-[protein] + ATP = O-phospho-L-threonyl-[protein] + ADP + H(+). Functionally, required for early events during cytokinesis including localization of cytoskeletal components to the cytokinetic ring. This is Cytokinesis protein sepH from Aspergillus terreus (strain NIH 2624 / FGSC A1156).